A 200-amino-acid polypeptide reads, in one-letter code: UPF0301 protein BR0480/BS1330_I0481 (200 aa).

It belongs to the UPF0301 (AlgH) family.

The polypeptide is UPF0301 protein BR0480/BS1330_I0481 (Brucella suis biovar 1 (strain 1330)).